Consider the following 299-residue polypeptide: uncharacterized protein (299 aa).

Catalysis depends on charge relay system residues Thr-47 and Tyr-109. The Proton donor role is filled by Tyr-138. The active-site Schiff-base intermediate with substrate is the Lys-168.

This sequence belongs to the DapA family. Homotetramer.

The protein resides in the cytoplasm. This is an uncharacterized protein from Chloroflexus aurantiacus (strain ATCC 29366 / DSM 635 / J-10-fl).